The chain runs to 936 residues: Aftiphilin (936 aa).

Residues 1 to 36 (MEPDIIRMYSSSPPPLDNGAEDDDDDEFGEFGGFSE) form a disordered region. The interaction with AP1G1, AP1G2, GGA1 and GGA3 stretch occupies residues 1-523 (MEPDIIRMYS…ARKSSGTGTE (523 aa)). Over residues 19-29 (GAEDDDDDEFG) the composition is skewed to acidic residues. The short motif at 28–31 (FGEF) is the WXXF motif 1 element. A Phosphoserine modification is found at S151. Disordered stretches follow at residues 197 to 216 (TDDL…STHS) and 374 to 409 (KTSD…LDDS). Positions 374–389 (KTSDDEVGSPKEESRK) are enriched in basic and acidic residues. An interaction with AP1G1 region spans residues 386–610 (ESRKFTNFQS…EAWQSHRTDE (225 aa)). The residue at position 395 (S395) is a Phosphoserine. A WXXF motif 2 motif is present at residues 432-435 (FGDF). A WXXF motif 3 (partial) motif is present at residues 436–438 (GDF). The WXXF motif 4 signature appears at 478–481 (FGEF). A Phosphoserine modification is found at S518. The tract at residues 589–637 (GDQQATESHHRKEAWQSHRTDENIDTPGTPKTHSVPSATSKGAVASGHL) is disordered. The span at 595 to 610 (ESHHRKEAWQSHRTDE) shows a compositional bias: basic and acidic residues. T617 carries the phosphothreonine modification. Residues 617–628 (TPKTHSVPSATS) are compositionally biased toward polar residues. Positions 716–718 (YQW) match the CLTCL1/Clathrin-binding motif. Residues 825-829 (LLNLD) form a clathrin-binding region.

In terms of assembly, self-associates. Interacts with GGA1 (via GAE domain). Interacts with GGA3 (via GAE domain), AP1G1 (via GAE domain) and AP1G2 (via GAE domain). Component of the aftiphilin/p200/gamma-synergin complex, at least composed of AFTPH/aftiphilin, HEATR5B/p200a and SYNRG/gamma-synergin, which plays a role in the AP1G1/AP-1-mediated protein trafficking from early to recycling endosomes. Within the complex interacts with HEATR5B/p200a and SYNRG/gamma-synergin; the interactions are direct. Interacts with AP1G1/AP-1; the interaction is required to recruit AFTPH/aftiphilin to the perinuclear region of the cell. Interacts with CLTCL1/Clathrin.

Its subcellular location is the cytoplasm. The protein localises to the perinuclear region. The protein resides in the cytoplasmic vesicle. It is found in the clathrin-coated vesicle. Its function is as follows. Component of clathrin-coated vesicles. Component of the aftiphilin/p200/gamma-synergin complex, which plays roles in AP1G1/AP-1-mediated protein trafficking including the trafficking of transferrin from early to recycling endosomes, and the membrane trafficking of furin and the lysosomal enzyme cathepsin D between the trans-Golgi network (TGN) and endosomes. This is Aftiphilin (AFTPH) from Homo sapiens (Human).